A 444-amino-acid polypeptide reads, in one-letter code: C4-dicarboxylate transport protein (444 aa).

8 helical membrane passes run Leu7–Tyr29, Ile44–Met66, Ala79–Val101, Ile143–Ala165, Val186–Phe208, Leu221–Ile243, Val291–Met313, and Phe353–Leu375. Positions Ser418–Lys444 are disordered.

Belongs to the dicarboxylate/amino acid:cation symporter (DAACS) (TC 2.A.23) family.

Its subcellular location is the cell inner membrane. Its function is as follows. Responsible for the transport of dicarboxylates such as succinate, fumarate, and malate from the periplasm across the inner membrane. This Pseudomonas chlororaphis (Pseudomonas aureofaciens) protein is C4-dicarboxylate transport protein.